Reading from the N-terminus, the 108-residue chain is Glutaredoxin-1 (108 aa).

Residues 3 to 106 (EEFVQQRLTN…DILSSIGVLR (104 aa)) enclose the Glutaredoxin domain. Cysteine 23 and cysteine 26 form a disulfide bridge.

It belongs to the glutaredoxin family.

Its subcellular location is the virion. Displays thioltransferase and dehydroascorbate reductase activities. This chain is Glutaredoxin-1 (OPG075), found in Variola virus (isolate Human/India/Ind3/1967) (VARV).